Reading from the N-terminus, the 181-residue chain is MSQSPIDYNESLRPDDMLDNELNYELANEVSAGDEEPYDDDIWESEDLEPVGHDIQPMDSVSDFHVKDFSEKKYSPYTDEIASAQLTGPSESAFGSASSLGTVESPVTMQSATLLWDPSVKEVDDILHNEDFYDGRDLNIFTLRGFVNILTLILLSCGLLMLFIGYPILSAVEVEKQRKKN.

A disordered region spans residues 25–47 (ELANEVSAGDEEPYDDDIWESED). Residues 32–47 (AGDEEPYDDDIWESED) are compositionally biased toward acidic residues. A helical membrane pass occupies residues 149–169 (ILTLILLSCGLLMLFIGYPIL).

Its subcellular location is the cytoplasm. The protein localises to the membrane. This is an uncharacterized protein from Schizosaccharomyces pombe (strain 972 / ATCC 24843) (Fission yeast).